Reading from the N-terminus, the 209-residue chain is Guanylate kinase (209 aa).

Residues 16–198 (GRLVIISGPS…AVTEICQILL (183 aa)) form the Guanylate kinase-like domain. 23–30 (GPSGAGKS) lines the ATP pocket.

The protein belongs to the guanylate kinase family.

It is found in the cytoplasm. The enzyme catalyses GMP + ATP = GDP + ADP. In terms of biological role, essential for recycling GMP and indirectly, cGMP. In Rhodopirellula baltica (strain DSM 10527 / NCIMB 13988 / SH1), this protein is Guanylate kinase.